The chain runs to 802 residues: MANTKKTTLDITGMTCAACSNRIEKKLNKLDDVNAQVNLTTEKATVEYNPDQHDVQEFINTIQHLGYGVAVETVELDITGMTCAACSSRIEKVLNKMDGVQNATVNLTTEQAKVDYYPEETDADKLVTRIQKLGYDASIKDNNKDQTSRKAEALQHKLIKLIISAVLSLPLLMLMFVHLFNMHIPALFTNPWFQFILATPVQFIIGWQFYVGAYKNLRNGGANMDVLVAVGTSAAYFYSIYEMIRWLNGSTTQPHLYFETSAVLITLILFGKYLEARAKSQTTNALGELLSLQAKEARILKDGNELMIPLNEVHVGDTLIVKPGEKIPVDGKIIKGMTAIDESMLTGESIPVEKNVDDTVIGSTMNKNGTITMTATKVGGDTALANIIKVVEEAQSSKAPIQRLADIISGYFVPIVVGIALLTFIVWITLVTPGTFEPALVASISVLVIACPCALGLATPTSIMVGTGRAAENGILFKGGEFVERTHQIDTIVLDKTGTITNGRPVVTDYHGDDQTLQLLATAEKDSEHPLAEAIVNYAKEKQLTLTETTTFKAVPGHGIEATIDHHHILVGNRKLMADNDISLPKHISDDLTHYERDGKTAMLIAVNYSLTGIIAVADTLKNHAKDAIKQLHDMGIEVAMLTGDNKNTAQAIAKQVGIDTVIADILPEEKAAQIAKLQQQGKKVAMVGDGVNDAPALVKADIGIAIGTGTEVAIEAAGITILGGDLMLIPKAIYASKATIRNIRQNLFWAFGYNIAGIPIAALGLLAPWVAGAAMALSSVSVVTNALRLKKMRLEPRRKDA.

2 HMA domains span residues Lys-5–Ala-70 and Glu-72–Ser-138. Cu(+) contacts are provided by Cys-16, Cys-19, Cys-83, and Cys-86. 6 helical membrane passes run Leu-161 to Asn-181, Trp-192 to Gly-212, Met-224 to Ile-244, Leu-256 to Ala-276, Tyr-411 to Val-431, and Pro-438 to Ala-458. Catalysis depends on Asp-495, which acts as the 4-aspartylphosphate intermediate. Mg(2+)-binding residues include Asp-690 and Asp-694. 2 helical membrane-spanning segments follow: residues Leu-748–Leu-767 and Val-771–Leu-790.

The protein belongs to the cation transport ATPase (P-type) (TC 3.A.3) family. Type IB subfamily.

Its subcellular location is the cell membrane. It catalyses the reaction Cu(+)(in) + ATP + H2O = Cu(+)(out) + ADP + phosphate + H(+). In terms of biological role, involved in copper export. In Staphylococcus aureus (strain bovine RF122 / ET3-1), this protein is Copper-exporting P-type ATPase (copA).